Reading from the N-terminus, the 297-residue chain is Phosphoribosylaminoimidazole-succinocarboxamide synthase (297 aa).

This sequence belongs to the SAICAR synthetase family.

It carries out the reaction 5-amino-1-(5-phospho-D-ribosyl)imidazole-4-carboxylate + L-aspartate + ATP = (2S)-2-[5-amino-1-(5-phospho-beta-D-ribosyl)imidazole-4-carboxamido]succinate + ADP + phosphate + 2 H(+). It participates in purine metabolism; IMP biosynthesis via de novo pathway; 5-amino-1-(5-phospho-D-ribosyl)imidazole-4-carboxamide from 5-amino-1-(5-phospho-D-ribosyl)imidazole-4-carboxylate: step 1/2. The protein is Phosphoribosylaminoimidazole-succinocarboxamide synthase of Rhodococcus erythropolis (strain PR4 / NBRC 100887).